A 326-amino-acid polypeptide reads, in one-letter code: MSSLNKSIGSVTESPINVVVHNYDNNDPTETRHEVQTKHGKLVCFQKIGSNQSPNMPTIISYHDLGLNHTTCFSPFFNHPNMNHILPYLNIIHIEAPGHEFNAETIPSSQYPSITEMAEDIQYVLDYFKVKVFIGLGAGAGGCILTQYSIFYPRSVVGLVLVGSVIKSFSWLDWVKSWVELTTLPSLKNPTGVRKYLIDHYYADNLEETNPDLLEIIKKEMVLINPDNLYHYVHSFVKRDDIKEEQIKALGCKILLVVGKDSTYKEDIIDLFSQFNPRNSTILQVPDCGILVTAEKPGDIVEPFKLFMQGIGFLLDYYQSHDDAQK.

Belongs to the NDRG family.

The chain is NDRG-like protein from Dictyostelium discoideum (Social amoeba).